Consider the following 1155-residue polypeptide: Pesticidal crystal protein Cry1Ab (1155 aa).

The protein belongs to the delta endotoxin family.

Its function is as follows. Promotes colloidosmotic lysis by binding to the midgut epithelial cells of many lepidopteran larvae. In Bacillus thuringiensis subsp. aizawai, this protein is Pesticidal crystal protein Cry1Ab (cry1Ab).